The primary structure comprises 281 residues: MRPQIMPFYIEMGKGDGGITGEDILQNWMLKSNLKNVEILEELPLRPTKLVVAISEEIYPDVYTIEDFKEKVGDREVFIASEFPEIARKYAEKHGLNAIVFDPIGKTEAALLPPMPEADLIIEITEFGTTLKENMCRIIDLVMDKVHSVFIVNKESLKDEEKKQVMENLVTDLKEVIESRNLVSFYFNVPNEDDLRRIIDYLTENGFDPTISPLAKGGAAVHIIVDRSRVKFLKPIIRGMGAKRIATSPVITSGTNRAAQQKPFYLLSGIQREFPSASPFF.

It belongs to the ATP phosphoribosyltransferase family. Long subfamily. It depends on Mg(2+) as a cofactor.

Its subcellular location is the cytoplasm. It carries out the reaction 1-(5-phospho-beta-D-ribosyl)-ATP + diphosphate = 5-phospho-alpha-D-ribose 1-diphosphate + ATP. Its pathway is amino-acid biosynthesis; L-histidine biosynthesis; L-histidine from 5-phospho-alpha-D-ribose 1-diphosphate: step 1/9. Feedback inhibited by histidine. Catalyzes the condensation of ATP and 5-phosphoribose 1-diphosphate to form N'-(5'-phosphoribosyl)-ATP (PR-ATP). Has a crucial role in the pathway because the rate of histidine biosynthesis seems to be controlled primarily by regulation of HisG enzymatic activity. The chain is ATP phosphoribosyltransferase (hisG) from Archaeoglobus fulgidus (strain ATCC 49558 / DSM 4304 / JCM 9628 / NBRC 100126 / VC-16).